The sequence spans 305 residues: MSPETARPFIDIHAPVAQALAAGRPVVALESTIITHGMPYPDNGAMAANVEKIISDGGAVPATIAVIGGRIKIGLSDGERESLAMTGDAMKLSRADLGFAVAQGRTGGTTVAATMIAAEMVGIKVFATGGIGGVHKGAEKSFDISADLDELARTPVIVVSAGAKAILDIEKTLEVLETRGVPVVGHGCETMPAFWSRQSPFRAPLTLYKPEEIAHFFRTRVALGLGGGVLVANPVPENHEIPAEEMAGYIEAAQKAAEALNVTGKAVTPFLLGKILELTGGRSLKTNIALVENNARLAAEIAKAL.

Glu-30 acts as the Proton donor in catalysis. Residues Lys-91 and Val-111 each coordinate substrate. Residue Asp-143 coordinates Mn(2+). 145-147 (SAD) is a binding site for substrate. The Nucleophile role is filled by Lys-164.

It belongs to the pseudouridine-5'-phosphate glycosidase family. In terms of assembly, homotrimer. It depends on Mn(2+) as a cofactor.

It carries out the reaction D-ribose 5-phosphate + uracil = psi-UMP + H2O. Its function is as follows. Catalyzes the reversible cleavage of pseudouridine 5'-phosphate (PsiMP) to ribose 5-phosphate and uracil. Functions biologically in the cleavage direction, as part of a pseudouridine degradation pathway. The chain is Pseudouridine-5'-phosphate glycosidase from Mesorhizobium japonicum (strain LMG 29417 / CECT 9101 / MAFF 303099) (Mesorhizobium loti (strain MAFF 303099)).